Reading from the N-terminus, the 729-residue chain is Monosaccharide-sensing protein 3 (729 aa).

6 consecutive transmembrane segments (helical) span residues 5–25 (VLVA…NATI), 46–66 (GLIV…SGPV), 81–101 (VLYF…VLLF), 104–124 (LLDG…ISET), 135–155 (TFPQ…VFGM), and 165–185 (LMLG…AFFL). The segment at 337-372 (QESQWDPERNNEDSSDQDENLNSPLLSPQTTEPDDY) is disordered. Polar residues predominate over residues 356 to 367 (NLNSPLLSPQTT). A Phosphoserine modification is found at Ser446. The next 6 helical transmembrane spans lie at 511-531 (ALMV…NGVM), 557-577 (ASLL…LVSM), 581-601 (MLST…GSLV), 610-630 (LIST…FGAI), 650-670 (ICAL…PVML), and 673-693 (IGIA…WVFV).

The protein belongs to the major facilitator superfamily. Sugar transporter (TC 2.A.1.1) family. Weakly expressed.

It is found in the vacuole membrane. The enzyme catalyses D-glucose(out) + H(+)(in) = D-glucose(in) + H(+)(out). The catalysed reaction is sucrose(out) + H(+)(in) = sucrose(in) + H(+)(out). In terms of biological role, sugar proton-coupled antiporter which contributes to vacuolar sugar import (e.g. monosaccharides including glucose,sucrose and fructose), particularly during stress responses (e.g. in response to cold). The chain is Monosaccharide-sensing protein 3 from Arabidopsis thaliana (Mouse-ear cress).